A 542-amino-acid polypeptide reads, in one-letter code: MKLSKSTLIATLALTATSTNALVVQNPFSNIQQALKLDLSYDKLTSKLTDTFEQGKANIISTIAKVMNEPLDGLTPEIKNIWSEMLMKFPNSITELNFKAPPKKGKITTQQFDFHVTDAQVPNHKLRIKSTPKDLGIDTVKQYSGYLDVVDEDKHFFYYFFESRNDPKNDPVILWLNGGPGCSSLTGLFFELGPSSIDKNLKPVYNPHSWNANASVIFLDQPINVGYSYSSQSVSNTIAAGKDVYAFLQLFFKNFPEYANLDFHIAGESYAGHYIPAFASEILTHPERNFNLTSVLIGNGLTDPLVQYEYYEPMACGEGGEPSVLEPEECDGMLNSLPRCLSLIESCYESGSVWSCVPATIYCNNGQMGPYQKTGRNVYDIRTMCEGSSLCYSQLEYIDQYLNLPEVKKALGAEVDEYQSCNFDINRNFMFAGDWMKPYQKNVIDLLEKELPVLIYAGDKDFICNWLGNQAWTNRLEWSGSKGFTKAPVKSWKVGKNAAGEVKNYKHFTFLRVFGGGHMVPYDQPENALDMVNRWISGDYKY.

A signal peptide spans 1-21 (MKLSKSTLIATLALTATSTNA). Positions 22–127 (LVVQNPFSNI…DAQVPNHKLR (106 aa)) are excised as a propeptide. Cystine bridges form between Cys182–Cys421, Cys316–Cys330, Cys340–Cys363, Cys347–Cys356, and Cys385–Cys391. Asn213 carries N-linked (GlcNAc...) asparagine glycosylation. Ser269 is an active-site residue. Asn291 is a glycosylation site (N-linked (GlcNAc...) asparagine). Residue Asp461 is part of the active site. Substrate is bound at residue Cys464. The active site involves His518. Met519 contributes to the substrate binding site.

It belongs to the peptidase S10 family.

It localises to the vacuole. It carries out the reaction Release of a C-terminal amino acid with broad specificity.. Its function is as follows. Involved in degradation of small peptides. In Candida albicans (Yeast), this protein is Carboxypeptidase Y (CPY1).